Reading from the N-terminus, the 87-residue chain is Prohibitin 1 (87 aa).

The residue at position 8 (Thr-8) is a Phosphothreonine. Lys-62 carries the post-translational modification N6-acetyllysine. Tyr-83 bears the Phosphotyrosine mark.

This sequence belongs to the prohibitin family. The mitochondrial prohibitin complex consists of two subunits (PHB1 and PHB2), assembled into a membrane-associated ring-shaped supercomplex of approximately 1 mDa. Interacts with STOML2. Interacts with MAP1LC3B (membrane-bound form LC3-II); the interaction requires PHB2 and takes place upon Parkin-mediated mitochondrial damage. Interacts with STAT3 (unphosphorylated or phosphorylated at 'Ser-727'). Interacts with CLPB. Interacts with CD86 (via cytoplasmic domain); the interactions increases after priming with CD40.

It is found in the mitochondrion inner membrane. The protein resides in the nucleus. Its subcellular location is the cytoplasm. It localises to the cell membrane. Protein with pleiotropic attributes mediated in a cell-compartment- and tissue-specific manner, which include the plasma membrane-associated cell signaling functions, mitochondrial chaperone, and transcriptional co-regulator of transcription factors in the nucleus. Plays a role in adipose tissue and glucose homeostasis in a sex-specific manner. Contributes to pulmonary vascular remodeling by accelerating proliferation of pulmonary arterial smooth muscle cells. Its function is as follows. In the mitochondria, together with PHB2, forms large ring complexes (prohibitin complexes) in the inner mitochondrial membrane (IMM) and functions as a chaperone protein that stabilizes mitochondrial respiratory enzymes and maintains mitochondrial integrity in the IMM, which is required for mitochondrial morphogenesis, neuronal survival, and normal lifespan. The prohibitin complex, with DNAJC19, regulates cardiolipin remodeling and the protein turnover of OMA1 in a cardiolipin-binding manner. Regulates mitochondrial respiration activity playing a role in cellular aging. The prohibitin complex plays a role of mitophagy receptor involved in targeting mitochondria for autophagic degradation. Involved in mitochondrial-mediated antiviral innate immunity, activates RIG-I-mediated signal transduction and production of IFNB1 and proinflammatory cytokine IL6. In terms of biological role, in the nucleus, acts as a transcription coregulator, enhances promoter binding by TP53, a transcription factor it activates, but reduces the promoter binding by E2F1, a transcription factor it represses. Interacts with STAT3 to affect IL17 secretion in T-helper Th17 cells. Functionally, in the plasma membrane, cooperates with CD86 to mediate CD86-signaling in B lymphocytes that regulates the level of IgG1 produced through the activation of distal signaling intermediates. Upon CD40 engagement, required to activate NF-kappa-B signaling pathway via phospholipase C and protein kinase C activation. This Mesocricetus auratus (Golden hamster) protein is Prohibitin 1 (PHB1).